We begin with the raw amino-acid sequence, 339 residues long: Anthranilate phosphoribosyltransferase (339 aa).

5-phospho-alpha-D-ribose 1-diphosphate contacts are provided by residues Gly-79, 82-83, Ser-87, 89-92, 107-115, and Ser-119; these read GD, NIST, and KHGNRSVSS. Gly-79 contributes to the anthranilate binding site. Ser-91 lines the Mg(2+) pocket. Residue Asn-110 coordinates anthranilate. An anthranilate-binding site is contributed by Arg-165. Asp-224 and Glu-225 together coordinate Mg(2+).

This sequence belongs to the anthranilate phosphoribosyltransferase family. As to quaternary structure, homodimer. Requires Mg(2+) as cofactor.

It catalyses the reaction N-(5-phospho-beta-D-ribosyl)anthranilate + diphosphate = 5-phospho-alpha-D-ribose 1-diphosphate + anthranilate. Its pathway is amino-acid biosynthesis; L-tryptophan biosynthesis; L-tryptophan from chorismate: step 2/5. In terms of biological role, catalyzes the transfer of the phosphoribosyl group of 5-phosphorylribose-1-pyrophosphate (PRPP) to anthranilate to yield N-(5'-phosphoribosyl)-anthranilate (PRA). This Exiguobacterium sibiricum (strain DSM 17290 / CCUG 55495 / CIP 109462 / JCM 13490 / 255-15) protein is Anthranilate phosphoribosyltransferase.